The primary structure comprises 381 residues: MTAATLFTPSITPQFDKASIDIDVNHHDKTTDIEQMLYDDVDDRNDDFMDEQADNILADTQSLTESVHFRKLQKKLRRQVSWAIRDFNMIEDGDVVMVCVSGGKDSYTLLDILLLLKRIAPIHFDIVAVNLDQKQPGYPEEVLPAYLNEQGIAHYILEKDTYSIVKSVVPEGKTYCSACSRLRRGSLYGFAKQIGATKIALGHHRDDMLATFFLNLFHGGALKSMPPKLLSDDKQNMLIRPLAYVEEKDIIEYSNLKEFPIIPCNLCGSQTNLQRAIINDMLREWDDAHPQRLASIFKAMQNVAPSQLADRELFDFETLSLDRDDNERLFEGDNIQAGQIESLAEIGLPVSPETQIFNPDFANAEKGSRAPKKIPTINPVI.

A PP-loop motif motif is present at residues serine 101–serine 106. Residues cysteine 176, cysteine 179, and cysteine 267 each coordinate [4Fe-4S] cluster.

Belongs to the TtcA family. In terms of assembly, homodimer. The cofactor is Mg(2+). [4Fe-4S] cluster serves as cofactor.

The protein resides in the cytoplasm. The catalysed reaction is cytidine(32) in tRNA + S-sulfanyl-L-cysteinyl-[cysteine desulfurase] + AH2 + ATP = 2-thiocytidine(32) in tRNA + L-cysteinyl-[cysteine desulfurase] + A + AMP + diphosphate + H(+). It functions in the pathway tRNA modification. Its function is as follows. Catalyzes the ATP-dependent 2-thiolation of cytidine in position 32 of tRNA, to form 2-thiocytidine (s(2)C32). The sulfur atoms are provided by the cysteine/cysteine desulfurase (IscS) system. The protein is tRNA-cytidine(32) 2-sulfurtransferase of Psychrobacter cryohalolentis (strain ATCC BAA-1226 / DSM 17306 / VKM B-2378 / K5).